The following is a 600-amino-acid chain: Oligopeptide-binding protein OppA (600 aa).

The N-terminal stretch at 1 to 22 (MKKLKVTLLASSVVLAAALLSA) is a signal peptide. A lipid anchor (N-palmitoyl cysteine) is attached at C23. C23 carries the S-diacylglycerol cysteine lipid modification.

Belongs to the bacterial solute-binding protein 5 family. In terms of assembly, the complex is composed of two ATP-binding proteins (OppD and OppF), two transmembrane proteins (OppB and OppC) and a solute-binding protein (OppA).

Its subcellular location is the cell membrane. Part of the ABC transporter complex OppABCDF involved in the uptake of oligopeptides. In Lactococcus lactis subsp. lactis (strain IL1403) (Streptococcus lactis), this protein is Oligopeptide-binding protein OppA (oppA).